The following is a 122-amino-acid chain: Large ribosomal subunit protein uL14 (122 aa).

Belongs to the universal ribosomal protein uL14 family. In terms of assembly, part of the 50S ribosomal subunit. Forms a cluster with proteins L3 and L19. In the 70S ribosome, L14 and L19 interact and together make contacts with the 16S rRNA in bridges B5 and B8.

In terms of biological role, binds to 23S rRNA. Forms part of two intersubunit bridges in the 70S ribosome. This Caulobacter vibrioides (strain ATCC 19089 / CIP 103742 / CB 15) (Caulobacter crescentus) protein is Large ribosomal subunit protein uL14.